A 726-amino-acid polypeptide reads, in one-letter code: Penicillin-binding protein 1A (726 aa).

Topologically, residues 1–3 are cytoplasmic; sequence MKK. A helical; Signal-anchor for type II membrane protein transmembrane segment spans residues 4–24; sequence LVIGILGIVIALFVGLLVFLI. The Periplasmic segment spans residues 25-726; the sequence is PIYKNLPDPK…SDLNAILGLR (702 aa). Residues 45 to 213 form a transglycosylase region; the sequence is SEVYDAKGRL…AKYNPFYHPE (169 aa). Residue Glu-83 is the Proton donor; for transglycosylase activity of the active site. Residues 379–662 form a transpeptidase region; sequence KYLGGNRAEI…SRVALPIWID (284 aa). Ser-432 serves as the catalytic Acyl-ester intermediate; for transpeptidase activity.

In the N-terminal section; belongs to the glycosyltransferase 51 family. The protein in the C-terminal section; belongs to the transpeptidase family.

The protein resides in the cell inner membrane. It catalyses the reaction [GlcNAc-(1-&gt;4)-Mur2Ac(oyl-L-Ala-gamma-D-Glu-L-Lys-D-Ala-D-Ala)](n)-di-trans,octa-cis-undecaprenyl diphosphate + beta-D-GlcNAc-(1-&gt;4)-Mur2Ac(oyl-L-Ala-gamma-D-Glu-L-Lys-D-Ala-D-Ala)-di-trans,octa-cis-undecaprenyl diphosphate = [GlcNAc-(1-&gt;4)-Mur2Ac(oyl-L-Ala-gamma-D-Glu-L-Lys-D-Ala-D-Ala)](n+1)-di-trans,octa-cis-undecaprenyl diphosphate + di-trans,octa-cis-undecaprenyl diphosphate + H(+). The enzyme catalyses Preferential cleavage: (Ac)2-L-Lys-D-Ala-|-D-Ala. Also transpeptidation of peptidyl-alanyl moieties that are N-acyl substituents of D-alanine.. Its pathway is cell wall biogenesis; peptidoglycan biosynthesis. The protein is Penicillin-binding protein 1A (mrcA) of Aquifex aeolicus (strain VF5).